Reading from the N-terminus, the 145-residue chain is D-aminoacyl-tRNA deacylase (145 aa).

The short motif at 137-138 (GP) is the Gly-cisPro motif, important for rejection of L-amino acids element.

Belongs to the DTD family. Homodimer.

It is found in the cytoplasm. The enzyme catalyses glycyl-tRNA(Ala) + H2O = tRNA(Ala) + glycine + H(+). It carries out the reaction a D-aminoacyl-tRNA + H2O = a tRNA + a D-alpha-amino acid + H(+). In terms of biological role, an aminoacyl-tRNA editing enzyme that deacylates mischarged D-aminoacyl-tRNAs. Also deacylates mischarged glycyl-tRNA(Ala), protecting cells against glycine mischarging by AlaRS. Acts via tRNA-based rather than protein-based catalysis; rejects L-amino acids rather than detecting D-amino acids in the active site. By recycling D-aminoacyl-tRNA to D-amino acids and free tRNA molecules, this enzyme counteracts the toxicity associated with the formation of D-aminoacyl-tRNA entities in vivo and helps enforce protein L-homochirality. The sequence is that of D-aminoacyl-tRNA deacylase from Shewanella amazonensis (strain ATCC BAA-1098 / SB2B).